We begin with the raw amino-acid sequence, 337 residues long: Pyruvate dehydrogenase E1 component subunit beta (337 aa).

Position 73 (Glu-73) interacts with thiamine diphosphate.

In terms of assembly, heterodimer of an alpha and a beta chain. Thiamine diphosphate is required as a cofactor.

The catalysed reaction is N(6)-[(R)-lipoyl]-L-lysyl-[protein] + pyruvate + H(+) = N(6)-[(R)-S(8)-acetyldihydrolipoyl]-L-lysyl-[protein] + CO2. The pyruvate dehydrogenase complex catalyzes the overall conversion of pyruvate to acetyl-CoA and CO(2). It contains multiple copies of three enzymatic components: pyruvate dehydrogenase (E1), dihydrolipoamide acetyltransferase (E2) and lipoamide dehydrogenase (E3). The protein is Pyruvate dehydrogenase E1 component subunit beta (pdhB) of Leifsonia xyli subsp. xyli (strain CTCB07).